Reading from the N-terminus, the 463-residue chain is tRNA-splicing endonuclease subunit Sen2 (463 aa).

Phosphoserine is present on residues Ser32 and Ser147. Positions His120–His213 are disordered. 2 stretches are compositionally biased toward basic and acidic residues: residues Pro139 to Gln149 and Ser159 to Leu170. Catalysis depends on residues Tyr367 and His375. Residues Ser406, Ser409, and Ser413 each carry the phosphoserine modification. Lys414 is an active-site residue.

The protein belongs to the tRNA-intron endonuclease family. As to quaternary structure, tRNA splicing endonuclease is a heterotetramer composed of TSEN2, TSEN15, TSEN34/LENG5 and TSEN54. tRNA splicing endonuclease complex also contains proteins of the pre-mRNA 3'-end processing machinery such as CLP1, CPSF1, CPSF4 and CSTF2.

Its subcellular location is the nucleus. The protein localises to the nucleolus. The catalysed reaction is pretRNA = a 3'-half-tRNA molecule with a 5'-OH end + a 5'-half-tRNA molecule with a 2',3'-cyclic phosphate end + an intron with a 2',3'-cyclic phosphate and a 5'-hydroxyl terminus.. In terms of biological role, constitutes one of the two catalytic subunit of the tRNA-splicing endonuclease complex, a complex responsible for identification and cleavage of the splice sites in pre-tRNA. It cleaves pre-tRNA at the 5'- and 3'-splice sites to release the intron. The products are an intron and two tRNA half-molecules bearing 2',3'-cyclic phosphate and 5'-OH termini. There are no conserved sequences at the splice sites, but the intron is invariably located at the same site in the gene, placing the splice sites an invariant distance from the constant structural features of the tRNA body. Probably carries the active site for 5'-splice site cleavage. The tRNA splicing endonuclease is also involved in mRNA processing via its association with pre-mRNA 3'-end processing factors, establishing a link between pre-tRNA splicing and pre-mRNA 3'-end formation, suggesting that the endonuclease subunits function in multiple RNA-processing events. In Rattus norvegicus (Rat), this protein is tRNA-splicing endonuclease subunit Sen2 (Tsen2).